The chain runs to 125 residues: Glycine cleavage system H protein (125 aa).

A Lipoyl-binding domain is found at glycine 19–threonine 101. Position 60 is an N6-lipoyllysine (lysine 60).

This sequence belongs to the GcvH family. As to quaternary structure, the glycine cleavage system is composed of four proteins: P, T, L and H. Requires (R)-lipoate as cofactor.

Functionally, the glycine cleavage system catalyzes the degradation of glycine. The H protein shuttles the methylamine group of glycine from the P protein to the T protein. In Methylocella silvestris (strain DSM 15510 / CIP 108128 / LMG 27833 / NCIMB 13906 / BL2), this protein is Glycine cleavage system H protein.